Consider the following 357-residue polypeptide: UDP-N-acetylglucosamine--N-acetylmuramyl-(pentapeptide) pyrophosphoryl-undecaprenol N-acetylglucosamine transferase (357 aa).

UDP-N-acetyl-alpha-D-glucosamine-binding positions include 14-16, Asn-128, Arg-169, Ser-193, Ile-248, and Gln-292; that span reads TGG.

The protein belongs to the glycosyltransferase 28 family. MurG subfamily.

The protein localises to the cell inner membrane. It carries out the reaction di-trans,octa-cis-undecaprenyl diphospho-N-acetyl-alpha-D-muramoyl-L-alanyl-D-glutamyl-meso-2,6-diaminopimeloyl-D-alanyl-D-alanine + UDP-N-acetyl-alpha-D-glucosamine = di-trans,octa-cis-undecaprenyl diphospho-[N-acetyl-alpha-D-glucosaminyl-(1-&gt;4)]-N-acetyl-alpha-D-muramoyl-L-alanyl-D-glutamyl-meso-2,6-diaminopimeloyl-D-alanyl-D-alanine + UDP + H(+). It functions in the pathway cell wall biogenesis; peptidoglycan biosynthesis. Cell wall formation. Catalyzes the transfer of a GlcNAc subunit on undecaprenyl-pyrophosphoryl-MurNAc-pentapeptide (lipid intermediate I) to form undecaprenyl-pyrophosphoryl-MurNAc-(pentapeptide)GlcNAc (lipid intermediate II). The protein is UDP-N-acetylglucosamine--N-acetylmuramyl-(pentapeptide) pyrophosphoryl-undecaprenol N-acetylglucosamine transferase of Bdellovibrio bacteriovorus (strain ATCC 15356 / DSM 50701 / NCIMB 9529 / HD100).